Here is a 270-residue protein sequence, read N- to C-terminus: MPSSFDLLGEMIGLLQTEQLTSSLACPLPNALTKRQDLWRALINQRPALPLSKDYLNLEDAYLDDWRASFVPVSVKDCQKTNYTSLFLYHGDIRYLAVDAIVNAANSELLGCFIPNHGCIDNAIHTFAGSRLRLACQAIMTEQGRKEAIGQAKLTSAYHLPASYIIHTVGPRITKGRHVSPIRADLLARCYRSSLDLAVKAGLTSLAFCSISTGEFGFPKKEAAQIAIKTVLKWQAEHPESKTLTVIFNTFTSEDKALYDTYLQKENNCE.

The 195-residue stretch at 73-267 (VSVKDCQKTN…LYDTYLQKEN (195 aa)) folds into the Macro domain. ADP-D-ribose contacts are provided by aspartate 92, isoleucine 93, and asparagine 106. Positions 112, 117, and 119 each coordinate Zn(2+). The ADP-D-ribose site is built by cysteine 119, isoleucine 120, aspartate 121, serine 212, threonine 213, glycine 214, glutamate 215, and phenylalanine 216.

This sequence belongs to the MacroD-type family. Zn-Macro subfamily. The cofactor is Zn(2+).

It catalyses the reaction 4-O-(ADP-D-ribosyl)-L-aspartyl-[protein] + H2O = L-aspartyl-[protein] + ADP-D-ribose + H(+). ADP-ribosylhydrolase that specifically reverses the SirTM-mediated mono-ADP-ribosylation at an asparatate residue of GcvH-L, by releasing ADP-ribose from the target protein. May play a role in the regulation of the response to host-induced oxidative stress. In Streptococcus pyogenes serotype M6 (strain ATCC BAA-946 / MGAS10394), this protein is Protein-ADP-ribose hydrolase.